The chain runs to 166 residues: EEF1A lysine methyltransferase 1 (166 aa).

This sequence belongs to the class I-like SAM-binding methyltransferase superfamily. EFM5 family.

The protein resides in the cytoplasm. It catalyses the reaction L-lysyl-[protein] + 3 S-adenosyl-L-methionine = N(6),N(6),N(6)-trimethyl-L-lysyl-[protein] + 3 S-adenosyl-L-homocysteine + 3 H(+). Functionally, protein-lysine methyltransferase that selectively catalyzes the trimethylation of EEF1A at 'Lys-79'. The protein is EEF1A lysine methyltransferase 1 of Danio rerio (Zebrafish).